The following is a 253-amino-acid chain: Ribosomal RNA small subunit methyltransferase J (253 aa).

Residues 101–102 (RD), 117–118 (ER), and Asp-169 contribute to the S-adenosyl-L-methionine site.

This sequence belongs to the methyltransferase superfamily. RsmJ family.

The protein localises to the cytoplasm. It carries out the reaction guanosine(1516) in 16S rRNA + S-adenosyl-L-methionine = N(2)-methylguanosine(1516) in 16S rRNA + S-adenosyl-L-homocysteine + H(+). Its function is as follows. Specifically methylates the guanosine in position 1516 of 16S rRNA. This chain is Ribosomal RNA small subunit methyltransferase J, found in Psychromonas ingrahamii (strain DSM 17664 / CCUG 51855 / 37).